The primary structure comprises 100 residues: MNLTPREKDKLLIAMAAIVARRRLERGVKLNHPEAVALITDFVVEGARDGRPVAELMEAGAHVITRDQVMEGVAEMIHDIQVEATFPDGTKLVTVHEPIR.

It belongs to the urease gamma subunit family. In terms of assembly, heterotrimer of UreA (gamma), UreB (beta) and UreC (alpha) subunits. Three heterotrimers associate to form the active enzyme.

The protein resides in the cytoplasm. It catalyses the reaction urea + 2 H2O + H(+) = hydrogencarbonate + 2 NH4(+). The protein operates within nitrogen metabolism; urea degradation; CO(2) and NH(3) from urea (urease route): step 1/1. The sequence is that of Urease subunit gamma from Chelativorans sp. (strain BNC1).